A 1930-amino-acid polypeptide reads, in one-letter code: Ankyrin repeat domain-containing protein SAT10 (1930 aa).

ANK repeat units lie at residues 840 to 872 (FRHT…DLEE), 878 to 908 (GTWN…GVLN), 920 to 949 (SGNT…MRGY), 959 to 989 (QRSS…DYSK), 993 to 1023 (NGAS…FSNE), 1073 to 1102 (SGLT…DANG), 1106 to 1135 (EFEA…TKTE), 1144 to 1174 (GRTR…QLSH), 1178 to 1205 (NQRT…ETET), 1206 to 1235 (GLQE…EINA), 1239 to 1268 (YGNT…RLDL), 1272 to 1301 (DNVN…DVNA), 1304 to 1333 (GGDT…KFIL), 1339 to 1368 (RFEN…ERDL), 1400 to 1429 (SGWT…GRAA), 1514 to 1543 (QNML…SLTP), 1548 to 1577 (RHGT…MLAD), 1615 to 1644 (MGRN…NEDL), 1651 to 1680 (DGWT…KIFD), and 1696 to 1724 (KTWT…TTSD).

It functions in the pathway mycotoxin biosynthesis. Ankyrin repeat domain-containing protein; part of the satratoxin SC1 cluster involved in the biosynthesis of satratoxins, trichothecene mycotoxins that are associated with human food poisonings. Satratoxins are suggested to be made by products of multiple gene clusters (SC1, SC2 and SC3) that encode 21 proteins in all, including polyketide synthases, acetyltransferases, and other enzymes expected to modify the trichothecene skeleton. SC1 encodes 10 proteins, SAT1 to SAT10. The largest are SAT8, which encodes a putative polyketide synthase (PKS) with a conventional non-reducing architecture, and SAT10, a putative protein containing four ankyrin repeats and thus may be involved in protein scaffolding. The putative short-chain reductase SAT3 may assist the PKS in some capacity. SAT6 contains a secretory lipase domain and acts probably as a trichothecene esterase. SAT5 encodes a putative acetyltransferase, and so, with SAT6, may affect endogenous protection from toxicity. The probable transcription factor SAT9 may regulate the expression of the SC1 cluster. SC2 encodes proteins SAT11 to SAT16, the largest of which encodes the putative reducing PKS SAT13. SAT11 is a cytochrome P450 monooxygenase, while SAT14 and SAT16 are probable acetyltransferases. The SC2 cluster may be regulated by the transcription factor SAT15. SC3 is a small cluster that encodes 5 proteins, SAT17 to SAT21. SAT21 is a putative MFS-type transporter which may have a role in exporting secondary metabolites. The four other proteins putatively encoded in SC3 include the taurine hydroxylase-like protein SAT17, the O-methyltransferase SAT18, the acetyltransferase SAT19, and the Cys6-type zinc finger SAT20, the latter being probably involved in regulation of SC3 expression. This is Ankyrin repeat domain-containing protein SAT10 from Stachybotrys chartarum (strain CBS 109288 / IBT 7711) (Toxic black mold).